The primary structure comprises 113 residues: Hydrogenase maturation factor HypA (113 aa).

His-2 provides a ligand contact to Ni(2+). Zn(2+) contacts are provided by Cys-73, Cys-76, Cys-89, and Cys-92.

The protein belongs to the HypA/HybF family.

Its function is as follows. Involved in the maturation of [NiFe] hydrogenases. Required for nickel insertion into the metal center of the hydrogenase. The sequence is that of Hydrogenase maturation factor HypA from Prosthecochloris aestuarii (strain DSM 271 / SK 413).